The primary structure comprises 1062 residues: Zinc finger protein swm (1062 aa).

Residues Asp7 to Glu75 form the PWI domain. Disordered regions lie at residues Ala119–Gln145 and Lys171–Val340. Residues Asp134–Gln145 are compositionally biased toward polar residues. Residues Pro172–His182 are compositionally biased toward basic and acidic residues. Residues Ser197–Val207 show a composition bias toward low complexity. The segment covering Ser208 to Leu220 has biased composition (gly residues). A compositionally biased stretch (basic residues) spans Ser234 to Ser249. Basic and acidic residues-rich tracts occupy residues Arg264 to Gln273 and Arg294 to Arg310. Polar residues predominate over residues Arg322–Val340. The C3H1-type zinc-finger motif lies at Ser363 to Asn391. The tract at residues Glu416–Ser463 is disordered. The segment covering Gly423–Gln438 has biased composition (pro residues). Residues Ile444 to Gly461 show a composition bias toward polar residues. Positions Ser561 to Asp635 constitute an RRM domain. Disordered regions lie at residues Asn666 to Thr704, Thr716 to Ala741, Gln822 to Gln847, Ser886 to Val920, and Ala1004 to Arg1062. Over residues Gly721–Gly733 the composition is skewed to gly residues. Residues Asp823 to Val840 show a composition bias toward low complexity. Polar residues predominate over residues Ser1018–Gly1037. The span at Leu1046–Glu1056 shows a compositional bias: acidic residues.

The protein resides in the nucleus. Its function is as follows. Negatively regulates Hedgehog (hh) protein signal in wing development. Regulates neural-specific glycosylation by binding to FucTA mRNA and facilitating its nuclear export in neural cells. The chain is Zinc finger protein swm from Drosophila melanogaster (Fruit fly).